A 369-amino-acid chain; its full sequence is Thyroid hormone receptor beta (369 aa).

The interval 1–14 (MSGYIPSYLDKDEL) is modulating. Cys-15, Cys-18, Cys-32, Cys-35, Cys-53, Cys-59, Cys-69, and Cys-72 together coordinate Zn(2+). NR C4-type zinc fingers lie at residues 15-35 (CVVCGDKATGYHYRCITCEGC) and 53-77 (CKYEGKCVIDKVTRNQCQECRFKKC). Positions 15-89 (CVVCGDKATG…VGMATDLVLD (75 aa)) form a DNA-binding region, nuclear receptor. Residues 125–369 (EEWELIKIVT…PPLFLEVFED (245 aa)) form the NR LBD domain. 3,3',5-triiodo-L-thyronine contacts are provided by Arg-190, Asn-239, and His-343. Residues Arg-190, Asn-239, and His-343 each contribute to the L-thyroxine site.

This sequence belongs to the nuclear hormone receptor family. NR1 subfamily.

The protein localises to the nucleus. In terms of biological role, nuclear hormone receptor that can act as a repressor or activator of transcription. High affinity receptor for thyroid hormones, including triiodothyronine and thyroxine. This Cairina moschata (Muscovy duck) protein is Thyroid hormone receptor beta (THRB).